A 178-amino-acid chain; its full sequence is Ribulose bisphosphate carboxylase small subunit, chloroplastic (178 aa).

The N-terminal 54 residues, 1 to 54, are a transit peptide targeting the chloroplast; sequence MALISSAAVTTINRAPVQANLATPFTGLKSSAGFPVTKKNNDITSITSNGSRVN.

Belongs to the RuBisCO small chain family. In terms of assembly, heterohexadecamer of 8 large and 8 small subunits.

It localises to the plastid. The protein resides in the chloroplast. RuBisCO catalyzes two reactions: the carboxylation of D-ribulose 1,5-bisphosphate, the primary event in carbon dioxide fixation, as well as the oxidative fragmentation of the pentose substrate. Both reactions occur simultaneously and in competition at the same active site. Although the small subunit is not catalytic it is essential for maximal activity. The protein is Ribulose bisphosphate carboxylase small subunit, chloroplastic of Trifolium repens (Creeping white clover).